Reading from the N-terminus, the 142-residue chain is Large ribosomal subunit protein uL11 (142 aa).

It belongs to the universal ribosomal protein uL11 family. As to quaternary structure, part of the ribosomal stalk of the 50S ribosomal subunit. Interacts with L10 and the large rRNA to form the base of the stalk. L10 forms an elongated spine to which L12 dimers bind in a sequential fashion forming a multimeric L10(L12)X complex. In terms of processing, one or more lysine residues are methylated.

Functionally, forms part of the ribosomal stalk which helps the ribosome interact with GTP-bound translation factors. This Magnetococcus marinus (strain ATCC BAA-1437 / JCM 17883 / MC-1) protein is Large ribosomal subunit protein uL11.